Consider the following 858-residue polypeptide: DNA mismatch repair protein MutS (858 aa).

An ATP-binding site is contributed by 618–625 (GPNMGGKS).

This sequence belongs to the DNA mismatch repair MutS family.

Functionally, this protein is involved in the repair of mismatches in DNA. It is possible that it carries out the mismatch recognition step. This protein has a weak ATPase activity. This chain is DNA mismatch repair protein MutS, found in Shewanella woodyi (strain ATCC 51908 / MS32).